A 342-amino-acid polypeptide reads, in one-letter code: Probable tyrosine--tRNA ligase, cytoplasmic (342 aa).

Tyrosine 48 lines the L-tyrosine pocket. A 'HIGH' region motif is present at residues 53 to 61; the sequence is ITGKPHIGY. The L-tyrosine site is built by tyrosine 175, glutamine 179, aspartate 182, and glutamine 197. The 'KMSKS' region motif lies at 231-235; that stretch reads KMSSS.

This sequence belongs to the class-I aminoacyl-tRNA synthetase family. In terms of assembly, homodimer.

It localises to the cytoplasm. It carries out the reaction tRNA(Tyr) + L-tyrosine + ATP = L-tyrosyl-tRNA(Tyr) + AMP + diphosphate + H(+). The protein is Probable tyrosine--tRNA ligase, cytoplasmic of Enterocytozoon bieneusi (strain H348) (Microsporidian parasite).